A 144-amino-acid polypeptide reads, in one-letter code: Deoxyuridine 5'-triphosphate nucleotidohydrolase (144 aa).

Substrate-binding positions include 63–65, N76, and 80–82; these read RSG and TID.

Belongs to the dUTPase family. The cofactor is Mg(2+).

It catalyses the reaction dUTP + H2O = dUMP + diphosphate + H(+). It participates in pyrimidine metabolism; dUMP biosynthesis; dUMP from dCTP (dUTP route): step 2/2. Its function is as follows. This enzyme is involved in nucleotide metabolism: it produces dUMP, the immediate precursor of thymidine nucleotides and it decreases the intracellular concentration of dUTP so that uracil cannot be incorporated into DNA. In Bacteroides thetaiotaomicron (strain ATCC 29148 / DSM 2079 / JCM 5827 / CCUG 10774 / NCTC 10582 / VPI-5482 / E50), this protein is Deoxyuridine 5'-triphosphate nucleotidohydrolase.